Reading from the N-terminus, the 333-residue chain is Perchlorate reductase subunit beta (333 aa).

The 4Fe-4S ferredoxin-type 1 domain maps to 12 to 40 (LTYVTDLNKCIGCQTCTVACKKLWTTGPG). [4Fe-4S] cluster-binding residues include Cys21, Cys24, Cys27, and Cys31. The segment at 101-121 (KERVRPSPTPRSAPNWDEDQG) is disordered. 4Fe-4S ferredoxin-type domains are found at residues 128-159 (NSFFYLPRMCNHCTKPACLEACPNEAIYKREQ) and 161-190 (GIVVIHQDKCKGAQACVQSCPYAKPYFNPV). [4Fe-4S] cluster is bound by residues Cys137, Cys140, and Cys145. 3 residues coordinate [3Fe-4S] cluster: Cys149, Cys170, and Cys176. Residues Cys180, Cys197, Cys200, Cys212, and Cys216 each contribute to the [4Fe-4S] cluster site.

As to quaternary structure, heterotrimer of alpha, beta and gamma subunits. The cofactor is [3Fe-4S] cluster. It depends on [4Fe-4S] cluster as a cofactor.

Its subcellular location is the periplasm. Functionally, component of the perchlorate reductase that catalyzes the reduction of perchlorate to chlorite and allows anaerobic growth on perchlorate as the sole electron acceptor. The beta subunit may be responsible for electron transfer to the catalytic alpha subunit PcrA. The protein is Perchlorate reductase subunit beta (pcrB) of Dechloromonas aromatica (strain RCB).